A 203-amino-acid chain; its full sequence is MLAKGSEPWLFTATFITALFAVLSRAMNSSHLNHVAYIAMAMTFFMVLFFRDPERKVEVSDTYMISPADGTVIDIRGRKICIFMFLQNVHVNRAPISGKIREITYKKGGYLPAFCKDSERNERNEFIIHSKYGDVSVMQIAGTIARRIVSYSRVNDNIEQGQRIGMIRLGSRVDVTIPHDFEIIVRKGERVLAGKTIIATIKK.

Ser-171 (schiff-base intermediate with substrate; via pyruvic acid) is an active-site residue. Ser-171 carries the post-translational modification Pyruvic acid (Ser); by autocatalysis.

This sequence belongs to the phosphatidylserine decarboxylase family. PSD-A subfamily. Heterodimer of a large membrane-associated beta subunit and a small pyruvoyl-containing alpha subunit. Pyruvate serves as cofactor. Is synthesized initially as an inactive proenzyme. Formation of the active enzyme involves a self-maturation process in which the active site pyruvoyl group is generated from an internal serine residue via an autocatalytic post-translational modification. Two non-identical subunits are generated from the proenzyme in this reaction, and the pyruvate is formed at the N-terminus of the alpha chain, which is derived from the carboxyl end of the proenzyme. The post-translation cleavage follows an unusual pathway, termed non-hydrolytic serinolysis, in which the side chain hydroxyl group of the serine supplies its oxygen atom to form the C-terminus of the beta chain, while the remainder of the serine residue undergoes an oxidative deamination to produce ammonia and the pyruvoyl prosthetic group on the alpha chain.

The protein resides in the cell membrane. The catalysed reaction is archaetidylserine + H(+) = archaetidylethanolamine + CO2. In terms of biological role, catalyzes the formation of archaetidylethanolamine (PtdEtn) from archaetidylserine (PtdSer). The chain is Putative archaetidylserine decarboxylase proenzyme from Methanosarcina barkeri (strain Fusaro / DSM 804).